The sequence spans 1243 residues: Inositol hexakisphosphate and diphosphoinositol-pentakisphosphate kinase 2 (1243 aa).

Ser-38 is subject to Phosphoserine. Lys-53–Lys-54 is a substrate binding site. The ATP site is built by Arg-134, Lys-187, His-194, and Arg-213. Arg-213–Lys-214 is a substrate binding site. Ser-223 is modified (phosphoserine). ATP contacts are provided by residues Glu-237–Met-240 and Asp-246–Lys-248. Substrate-binding residues include Lys-248 and Arg-262. ATP-binding positions include Ser-264, Asp-309, and Asp-321–Asn-323. Residue Ser-326 to Lys-329 participates in substrate binding. The tract at residues Pro-371–Met-442 is polyphosphoinositide-binding domain. 2 disordered regions span residues Lys-898–Val-941 and His-957–Ser-1016. Basic and acidic residues predominate over residues Ala-915–Val-941. The span at Ile-958 to Lys-969 shows a compositional bias: basic residues. Phosphoserine is present on residues Ser-1006, Ser-1016, Ser-1074, Ser-1091, Ser-1165, Ser-1172, and Ser-1180. Residues Thr-1185 to Lys-1243 form a disordered region. Over residues Ala-1195 to Ser-1209 the composition is skewed to low complexity. The span at Gly-1210–Ser-1220 shows a compositional bias: polar residues. Phosphoserine is present on residues Ser-1220 and Ser-1221.

It belongs to the histidine acid phosphatase family. VIP1 subfamily.

It is found in the cytoplasm. The protein localises to the cytosol. It catalyses the reaction 1D-myo-inositol hexakisphosphate + ATP = 1-diphospho-1D-myo-inositol 2,3,4,5,6-pentakisphosphate + ADP. The enzyme catalyses 5-diphospho-1D-myo-inositol 1,2,3,4,6-pentakisphosphate + ATP + H(+) = 1,5-bis(diphospho)-1D-myo-inositol 2,3,4,6-tetrakisphosphate + ADP. Bifunctional inositol kinase that acts in concert with the IP6K kinases IP6K1, IP6K2 and IP6K3 to synthesize the diphosphate group-containing inositol pyrophosphates diphosphoinositol pentakisphosphate, PP-InsP5, and bis-diphosphoinositol tetrakisphosphate, (PP)2-InsP4. PP-InsP5 and (PP)2-InsP4, also respectively called InsP7 and InsP8, regulate a variety of cellular processes, including apoptosis, vesicle trafficking, cytoskeletal dynamics, exocytosis, insulin signaling and neutrophil activation. Phosphorylates inositol hexakisphosphate (InsP6) at position 1 to produce PP-InsP5 which is in turn phosphorylated by IP6Ks to produce (PP)2-InsP4. Alternatively, phosphorylates PP-InsP5 at position 1, produced by IP6Ks from InsP6, to produce (PP)2-InsP4. Required for normal hearing. This Homo sapiens (Human) protein is Inositol hexakisphosphate and diphosphoinositol-pentakisphosphate kinase 2.